Consider the following 290-residue polypeptide: F-box protein PP2-A13 (290 aa).

Positions 21–67 (RKLRLVDLPENCVALIMTRLDPPEICRLARLNRMFRRASSADFIWES) constitute an F-box domain.

Part of a SCF (ASK-cullin-F-box) protein ligase complex. Interacts with SKP1A/ASK1, SKP1B/ASK2, ASK5, ASK11 and ASK13.

The protein resides in the nucleus. Its pathway is protein modification; protein ubiquitination. Functionally, component of SCF(ASK-cullin-F-box) E3 ubiquitin ligase complexes, which may mediate the ubiquitination and subsequent proteasomal degradation of target proteins. The sequence is that of F-box protein PP2-A13 (PP2A13) from Arabidopsis thaliana (Mouse-ear cress).